Here is a 219-residue protein sequence, read N- to C-terminus: Vacuolar protein sorting-associated protein 20 homolog 1 (219 aa).

Residues 20–60 (SLKTQRRKLGQYQQKLEKVIEAEKQAARDLIREKRKDRALL) adopt a coiled-coil conformation. Positions 171–219 (PEVPTKESEESEKLDLPDVPTKTPVASNAEITPAESATKTKVLEEPLPA) are disordered. Positions 174–186 (PTKESEESEKLDL) are enriched in basic and acidic residues. The segment covering 194–209 (PVASNAEITPAESATK) has biased composition (polar residues).

Belongs to the SNF7 family. As to quaternary structure, component of the endosomal sorting required for transport complex III (ESCRT-III), composed at least of VPS2, VPS20, VPS24 and VPS32. Interacts with SKD1.

The protein localises to the endosome. Component of the ESCRT-III complex, which is required for multivesicular bodies (MVBs) formation and sorting of endosomal cargo proteins into MVBs. The ESCRT-III complex is probably involved in the concentration of MVB cargo. This Arabidopsis thaliana (Mouse-ear cress) protein is Vacuolar protein sorting-associated protein 20 homolog 1 (VPS20.1).